The sequence spans 3135 residues: Beauvericin nonribosomal cyclodepsipeptide synthetase BEA1 (3135 aa).

Positions His-70 to Leu-458 are condensation 1. Positions Leu-196–Gly-228 are disordered. The segment at Ser-499–Arg-896 is adenylation 1. In terms of domain architecture, Carrier 1 spans Ser-1021 to Ala-1097. An O-(pantetheine 4'-phosphoryl)serine modification is found at Ser-1058. The condensation 2 stretch occupies residues Ser-1115–Thr-1542. Positions Phe-1571–Arg-1974 are adenylation 2. The tract at residues Met-2042–Val-2182 is S-adenosyl-L-methionine-dependent N-methyltransferase. 2 consecutive Carrier domains span residues Val-2509–Leu-2583 and Ala-2603–Asp-2677. Residues Ser-2543 and Ser-2637 each carry the O-(pantetheine 4'-phosphoryl)serine modification. The tract at residues Gln-2721–Thr-3127 is condensation 3.

It belongs to the NRP synthetase family.

The catalysed reaction is 3 (R)-2-hydroxy-3-methylbutanoate + 3 L-phenylalanine + 3 S-adenosyl-L-methionine + 6 ATP = beauvericin + 6 AMP + 3 S-adenosyl-L-homocysteine + 6 diphosphate + 6 H(+). Beauvericin nonribosomal cyclodepsipeptide synthetase; part of the gene cluster that mediates the biosynthesis of beauvericin (BEA), a non-ribosomal cyclic hexadepsipeptide that shows antibiotic, antifungal, insecticidal, and cancer cell antiproliferative and antihaptotactic activity. Ketoisovalerate reductase BEA2 catalyzes the NADPH-specific reduction of ketoisovaleric acid to hydroxyisovalerate, a precursor for beauvericin biosynthesis. The nonribosomal cyclodepsipeptide synthetase BEA1 then catalyzes the formation of beauvericin via condensation and cyclization of 3 dipeptidol monomers, each composed of one unit of hydroxyisovalerate and one unit of N-methyl-phenylalanine. In Gibberella fujikuroi (strain CBS 195.34 / IMI 58289 / NRRL A-6831) (Bakanae and foot rot disease fungus), this protein is Beauvericin nonribosomal cyclodepsipeptide synthetase BEA1.